The following is a 477-amino-acid chain: Bifunctional protein HldE (477 aa).

The interval 1 to 318 is ribokinase; sequence MKVTLPEFER…ENAVRGRAET (318 aa). 195–198 serves as a coordination point for ATP; the sequence is NLSE. Residue Asp264 is part of the active site. The interval 344–477 is cytidylyltransferase; that stretch reads MTNGVFDILH…IKKIQKDSDK (134 aa).

In the N-terminal section; belongs to the carbohydrate kinase PfkB family. The protein in the C-terminal section; belongs to the cytidylyltransferase family. Homodimer.

It carries out the reaction D-glycero-beta-D-manno-heptose 7-phosphate + ATP = D-glycero-beta-D-manno-heptose 1,7-bisphosphate + ADP + H(+). It catalyses the reaction D-glycero-beta-D-manno-heptose 1-phosphate + ATP + H(+) = ADP-D-glycero-beta-D-manno-heptose + diphosphate. It participates in nucleotide-sugar biosynthesis; ADP-L-glycero-beta-D-manno-heptose biosynthesis; ADP-L-glycero-beta-D-manno-heptose from D-glycero-beta-D-manno-heptose 7-phosphate: step 1/4. Its pathway is nucleotide-sugar biosynthesis; ADP-L-glycero-beta-D-manno-heptose biosynthesis; ADP-L-glycero-beta-D-manno-heptose from D-glycero-beta-D-manno-heptose 7-phosphate: step 3/4. Catalyzes the phosphorylation of D-glycero-D-manno-heptose 7-phosphate at the C-1 position to selectively form D-glycero-beta-D-manno-heptose-1,7-bisphosphate. In terms of biological role, catalyzes the ADP transfer from ATP to D-glycero-beta-D-manno-heptose 1-phosphate, yielding ADP-D-glycero-beta-D-manno-heptose. This is Bifunctional protein HldE from Klebsiella pneumoniae (strain 342).